The chain runs to 357 residues: Holliday junction branch migration complex subunit RuvB (357 aa).

The span at 1–15 shows a compositional bias: low complexity; sequence MAIQSDSLSSLPDSP. Positions 1-30 are disordered; the sequence is MAIQSDSLSSLPDSPRIVAPQPVSPNEESI. Residues 13-195 are large ATPase domain (RuvB-L); sequence DSPRIVAPQP…FGIVSRLEFY (183 aa). Residues L34, R35, G76, K79, T80, T81, 142-144, R185, Y195, and R232 contribute to the ATP site; that span reads EDF. T80 provides a ligand contact to Mg(2+). The segment at 196 to 266 is small ATPAse domain (RuvB-S); that stretch reads NTDELARIVT…AAGRALAMLD (71 aa). Positions 269-357 are head domain (RuvB-H); it reads PQGLDVMDRK…SGGTGELFSK (89 aa). DNA is bound by residues R305, R324, and R329.

Belongs to the RuvB family. Homohexamer. Forms an RuvA(8)-RuvB(12)-Holliday junction (HJ) complex. HJ DNA is sandwiched between 2 RuvA tetramers; dsDNA enters through RuvA and exits via RuvB. An RuvB hexamer assembles on each DNA strand where it exits the tetramer. Each RuvB hexamer is contacted by two RuvA subunits (via domain III) on 2 adjacent RuvB subunits; this complex drives branch migration. In the full resolvosome a probable DNA-RuvA(4)-RuvB(12)-RuvC(2) complex forms which resolves the HJ.

It is found in the cytoplasm. It catalyses the reaction ATP + H2O = ADP + phosphate + H(+). Its function is as follows. The RuvA-RuvB-RuvC complex processes Holliday junction (HJ) DNA during genetic recombination and DNA repair, while the RuvA-RuvB complex plays an important role in the rescue of blocked DNA replication forks via replication fork reversal (RFR). RuvA specifically binds to HJ cruciform DNA, conferring on it an open structure. The RuvB hexamer acts as an ATP-dependent pump, pulling dsDNA into and through the RuvAB complex. RuvB forms 2 homohexamers on either side of HJ DNA bound by 1 or 2 RuvA tetramers; 4 subunits per hexamer contact DNA at a time. Coordinated motions by a converter formed by DNA-disengaged RuvB subunits stimulates ATP hydrolysis and nucleotide exchange. Immobilization of the converter enables RuvB to convert the ATP-contained energy into a lever motion, pulling 2 nucleotides of DNA out of the RuvA tetramer per ATP hydrolyzed, thus driving DNA branch migration. The RuvB motors rotate together with the DNA substrate, which together with the progressing nucleotide cycle form the mechanistic basis for DNA recombination by continuous HJ branch migration. Branch migration allows RuvC to scan DNA until it finds its consensus sequence, where it cleaves and resolves cruciform DNA. In Bordetella parapertussis (strain 12822 / ATCC BAA-587 / NCTC 13253), this protein is Holliday junction branch migration complex subunit RuvB.